Here is a 624-residue protein sequence, read N- to C-terminus: Pentatricopeptide repeat-containing protein At4g31070, mitochondrial (624 aa).

The N-terminal 15 residues, 1-15 (MRWVKLGRRVIMSRA), are a transit peptide targeting the mitochondrion. PPR repeat units lie at residues 56 to 91 (FTAI…GADC), 92 to 122 (DTVV…MLHR), 123 to 157 (DTVS…GFIP), 158 to 192 (KSEL…DERM), 195 to 225 (SVLL…MEVK), 226 to 260 (NEVS…NLRP), 261 to 296 (NRVT…GCHA), 297 to 327 (DERL…SKVR), 328 to 362 (DVVM…GIEA), 363 to 397 (NSVT…GFMS), 398 to 428 (HILL…LTEK), 429 to 463 (DLVS…GHEV), 464 to 498 (DDMA…HMPV), and 499 to 529 (TLEH…MPMK). A type E motif region spans residues 534–610 (IWSSLLSACE…CYGFSKIEPE (77 aa)).

The protein belongs to the PPR family. PCMP-E subfamily.

It is found in the mitochondrion. This Arabidopsis thaliana (Mouse-ear cress) protein is Pentatricopeptide repeat-containing protein At4g31070, mitochondrial (PCMP-E7).